A 76-amino-acid polypeptide reads, in one-letter code: Putative snRNP Sm-like protein (76 aa).

In terms of domain architecture, Sm spans 4–76 (RPLDVIHKSL…VLAISPVEIE (73 aa)).

Belongs to the snRNP Sm proteins family.

The protein is Putative snRNP Sm-like protein of Thermococcus sibiricus (strain DSM 12597 / MM 739).